We begin with the raw amino-acid sequence, 71 residues long: Beta-defensin 124 (71 aa).

The first 22 residues, M1–S22, serve as a signal peptide directing secretion. Intrachain disulfides connect C27–C54, C34–C48, and C38–C55.

Belongs to the beta-defensin family.

The protein resides in the secreted. Has antibacterial activity. The chain is Beta-defensin 124 (DEFB124) from Pan troglodytes (Chimpanzee).